The sequence spans 1120 residues: Transcriptional repressor NF-X1 (1120 aa).

An interaction with PABPC1 and PABC4 region spans residues 9–26; the sequence is GTFKFNTDAAEFIPQEKK. The disordered stretch occupies residues 22-295; that stretch reads PQEKKNSGLN…LNERPAKSTC (274 aa). Serine 50, serine 82, and serine 95 each carry phosphoserine. Residues 73-106 are compositionally biased toward polar residues; sequence YHPSGSKPKSQQTSFQSSPCNKSPKSHGLQNQPW. Positions 111–120 are enriched in basic residues; that stretch reads NEKHHIRVKK. Residues 124–141 show a composition bias toward polar residues; sequence LAEQTSDTAGLESSTRSE. Residues serine 129 and serine 150 each carry the phosphoserine modification. Basic and acidic residues-rich tracts occupy residues 142–159, 188–202, 222–254, and 282–291; these read SGTD…KEVV, LKCE…KPED, SSRK…EGAR, and PKDDLNERPA. The residue at position 326 (serine 326) is a Phosphoserine. Residues 358–409 form an RING-type; atypical zinc finger; that stretch reads CMVCCELVRVTAPVWSCQSCYHVFHLNCIKKWARSPASQADGQSGWRCPACQ. 8 NF-X1-type zinc fingers span residues 453 to 471, 506 to 525, 567 to 586, 632 to 655, 694 to 713, 721 to 740, 832 to 854, and 863 to 884; these read CPHS…PCPA, CGQH…PCQI, CGNH…QCPR, CGSL…PCSR, CGRH…KCPL, CGLH…TCWQ, CGMH…PCKQ, and CGHP…ACKA. Positions 994–1062 constitute an R3H domain; that stretch reads LKFVSDVEKE…KRNVVVTAIR (69 aa). Residues 1081-1109 form a disordered region; the sequence is QARPPPPIPHHRHQSDKNPGSSNLQKITK. Positions 1097–1106 are enriched in polar residues; that stretch reads KNPGSSNLQK.

This sequence belongs to the NFX1 family. In terms of assembly, isoform 1 interacts with PABPC1 and PABPC4. (Microbial infection) Isoform 1 and isoform 3 interact with human papillomavirus (HPV) type-16 E6 oncoprotein. In terms of processing, isoform 3 is polyubiquitinated in the presence of HPV16 E6 protein; which leads to proteasomal degradation. Isoform 1 is not polyubiquitinated.

It localises to the nucleus. Binds to the X-box motif of MHC class II genes and represses their expression. May play an important role in regulating the duration of an inflammatory response by limiting the period in which MHC class II molecules are induced by interferon-gamma. Isoform 3 binds to the X-box motif of TERT promoter and represses its expression. Together with PABPC1 or PABPC4, isoform 1 acts as a coactivator for TERT expression. Mediates E2-dependent ubiquitination. In Homo sapiens (Human), this protein is Transcriptional repressor NF-X1 (NFX1).